The primary structure comprises 399 residues: Proteasome-activating nucleotidase (399 aa).

The stretch at I19 to P60 forms a coiled coil. Residues G184–L189 and H323 contribute to the ATP site. The docks into pockets in the proteasome alpha-ring to cause gate opening stretch occupies residues I397 to G399.

This sequence belongs to the AAA ATPase family. In terms of assembly, homohexamer. The hexameric complex has a two-ring architecture resembling a top hat that caps the 20S proteasome core at one or both ends. Upon ATP-binding, the C-terminus of PAN interacts with the alpha-rings of the proteasome core by binding to the intersubunit pockets.

It is found in the cytoplasm. Its function is as follows. ATPase which is responsible for recognizing, binding, unfolding and translocation of substrate proteins into the archaeal 20S proteasome core particle. Is essential for opening the gate of the 20S proteasome via an interaction with its C-terminus, thereby allowing substrate entry and access to the site of proteolysis. Thus, the C-termini of the proteasomal ATPase function like a 'key in a lock' to induce gate opening and therefore regulate proteolysis. Unfolding activity requires energy from ATP hydrolysis, whereas ATP binding alone promotes ATPase-20S proteasome association which triggers gate opening, and supports translocation of unfolded substrates. The chain is Proteasome-activating nucleotidase from Pyrococcus horikoshii (strain ATCC 700860 / DSM 12428 / JCM 9974 / NBRC 100139 / OT-3).